We begin with the raw amino-acid sequence, 98 residues long: MTTVGVSLFRRSPEKITMKIATFLGLSFLLIASYVLICEAQHPGFQELLILEENMRDPENSKERSCAKPRENCNRMNILCCRGECVCPTFGDCFRYGD.

Positions 1-40 (MTTVGVSLFRRSPEKITMKIATFLGLSFLLIASYVLICEA) are cleaved as a signal peptide. The propeptide occupies 41-64 (QHPGFQELLILEENMRDPENSKER). 2 disulfide bridges follow: C66–C81 and C73–C85.

Belongs to the hainantoxin family. 17 subfamily. As to expression, expressed by the venom gland.

It is found in the secreted. Its function is as follows. Putative ion channel inhibitor. The sequence is that of Hainantoxin-XVII-2 from Cyriopagopus hainanus (Chinese bird spider).